A 405-amino-acid chain; its full sequence is Acetate kinase (405 aa).

Residue N7 participates in Mg(2+) binding. K14 contacts ATP. A substrate-binding site is contributed by R99. D156 acts as the Proton donor/acceptor in catalysis. Position 215–219 (215–219) interacts with ATP; it reads HLGNG. E391 serves as a coordination point for Mg(2+).

The protein belongs to the acetokinase family. In terms of assembly, homodimer. The cofactor is Mg(2+). Mn(2+) is required as a cofactor.

The protein resides in the cytoplasm. It catalyses the reaction acetate + ATP = acetyl phosphate + ADP. It functions in the pathway metabolic intermediate biosynthesis; acetyl-CoA biosynthesis; acetyl-CoA from acetate: step 1/2. Catalyzes the formation of acetyl phosphate from acetate and ATP. Can also catalyze the reverse reaction. The sequence is that of Acetate kinase from Nostoc sp. (strain PCC 7120 / SAG 25.82 / UTEX 2576).